Consider the following 276-residue polypeptide: MRVLETIVALREYRKSLEESVGFVPTMGALHKGHQSLIERSLKENSHTIVSVFVNPTQFGANEDFNAYPRPLEKDLALCEKLGVNAVFVPKIGEMYPYEAEQRLKLYAPKFLSSSLEGAMRKGHFDGVVQIVLKMFHLVNPTRAYFGKKDAQQLLIIEHLVKDLLLDIEIAPCEIVRDDDNLALSSRNVYLNATQRKQALAIPKALEKIQQAIDKGEKACEKLKKLGLEILETLEVDYLECCNHKLEPLTIIEPTNTLILVAARVGKTRLLDNLWV.

27–34 (MGALHKGH) serves as a coordination point for ATP. Histidine 34 (proton donor) is an active-site residue. (R)-pantoate is bound at residue glutamine 58. Residue glutamine 58 coordinates beta-alanine. 147–150 (GKKD) contacts ATP. Glutamine 153 lines the (R)-pantoate pocket. ATP contacts are provided by residues valine 176 and 184-187 (LSSR).

This sequence belongs to the pantothenate synthetase family. As to quaternary structure, homodimer.

The protein localises to the cytoplasm. The catalysed reaction is (R)-pantoate + beta-alanine + ATP = (R)-pantothenate + AMP + diphosphate + H(+). Its pathway is cofactor biosynthesis; (R)-pantothenate biosynthesis; (R)-pantothenate from (R)-pantoate and beta-alanine: step 1/1. Functionally, catalyzes the condensation of pantoate with beta-alanine in an ATP-dependent reaction via a pantoyl-adenylate intermediate. The polypeptide is Pantothenate synthetase (Helicobacter pylori (strain ATCC 700392 / 26695) (Campylobacter pylori)).